Consider the following 325-residue polypeptide: Undecaprenyl-phosphate 4-deoxy-4-formamido-L-arabinose transferase (325 aa).

2 helical membrane passes run 236–256 (LSIF…LLIL) and 270–290 (VFTL…GMGL).

The protein belongs to the glycosyltransferase 2 family.

Its subcellular location is the cell inner membrane. The enzyme catalyses UDP-4-deoxy-4-formamido-beta-L-arabinose + di-trans,octa-cis-undecaprenyl phosphate = 4-deoxy-4-formamido-alpha-L-arabinopyranosyl di-trans,octa-cis-undecaprenyl phosphate + UDP. The protein operates within glycolipid biosynthesis; 4-amino-4-deoxy-alpha-L-arabinose undecaprenyl phosphate biosynthesis; 4-amino-4-deoxy-alpha-L-arabinose undecaprenyl phosphate from UDP-4-deoxy-4-formamido-beta-L-arabinose and undecaprenyl phosphate: step 1/2. It participates in bacterial outer membrane biogenesis; lipopolysaccharide biosynthesis. In terms of biological role, catalyzes the transfer of 4-deoxy-4-formamido-L-arabinose from UDP to undecaprenyl phosphate. The modified arabinose is attached to lipid A and is required for resistance to polymyxin and cationic antimicrobial peptides. The sequence is that of Undecaprenyl-phosphate 4-deoxy-4-formamido-L-arabinose transferase from Edwardsiella ictaluri (strain 93-146).